Here is a 143-residue protein sequence, read N- to C-terminus: Large ribosomal subunit protein uL11 (143 aa).

This sequence belongs to the universal ribosomal protein uL11 family. As to quaternary structure, part of the ribosomal stalk of the 50S ribosomal subunit. Interacts with L10 and the large rRNA to form the base of the stalk. L10 forms an elongated spine to which L12 dimers bind in a sequential fashion forming a multimeric L10(L12)X complex. In terms of processing, one or more lysine residues are methylated.

Its function is as follows. Forms part of the ribosomal stalk which helps the ribosome interact with GTP-bound translation factors. The protein is Large ribosomal subunit protein uL11 of Stutzerimonas stutzeri (strain A1501) (Pseudomonas stutzeri).